The chain runs to 294 residues: Mating type protein mtA-1 (294 aa).

The segment at residues 46-101 (TAKKKVNGFMGFRSNYSPLFSYLPQKMRSPFMTILWQYDPYHNEWDFMCSVYSSIR) is a DNA-binding region (alpha box).

The protein belongs to the MATALPHA1 family.

Its subcellular location is the nucleus. Its function is as follows. Mating type proteins are sequence specific DNA-binding proteins that act as master switches in fungal differentiation by controlling gene expression in a cell type-specific fashion. Transcriptional activator that induces the transcription of alpha-specific genes. The sequence is that of Mating type protein mtA-1 (MTA1) from Sordaria equina.